The sequence spans 521 residues: Acidic amino acid decarboxylase GADL1 (521 aa).

Residue K333 is modified to N6-(pyridoxal phosphate)lysine.

It belongs to the group II decarboxylase family. In terms of assembly, homodimer. Requires pyridoxal 5'-phosphate as cofactor. As to expression, expressed very weakly in neurons and not detected in astrocytes, brain or liver.

The catalysed reaction is L-aspartate + H(+) = beta-alanine + CO2. It carries out the reaction 3-sulfino-L-alanine + H(+) = hypotaurine + CO2. The enzyme catalyses L-cysteate + H(+) = taurine + CO2. Functionally, may catalyze the decarboxylation of L-aspartate, 3-sulfino-L-alanine (cysteine sulfinic acid), and L-cysteate to beta-alanine, hypotaurine and taurine, respectively. Does not exhibit any decarboxylation activity toward glutamate. This is Acidic amino acid decarboxylase GADL1 (GADL1) from Homo sapiens (Human).